The sequence spans 117 residues: Minor capsid protein p17 (117 aa).

Asn-12 carries an N-linked (GlcNAc...) asparagine; by host glycan. The chain crosses the membrane as a helical span at residues 39 to 59 (AILLGILILLVIILIIVAIVY). The disordered stretch occupies residues 96 to 117 (KNSTSQQSHIPSDEQLAELAHS). N-linked (GlcNAc...) asparagine; by host glycosylation is present at Asn-97.

It belongs to the asfivirus minor capsid protein p17 family. As to quaternary structure, interacts with the minor capsid protein M1249L and with the hexon capsid protein p72 capsomers; these interactions form a rigid zipper structure that stabilizes the capsomers. Interacts with host STING1.

It is found in the virion membrane. The protein localises to the host endoplasmic reticulum membrane. Together with the penton and the other minor capsid proteins (M1249L, p49), forms a complicated network immediately below the outer capsid shell, stabilizing the whole capsid. Three copies of p17 encircle each p72 capsomer in the inner capsid shell, anchoring p72 capsomers on the inner membrane. Required for the assembly of the capsid and icosahedral morphogenesis. Additionally, inhibits the host cGAS-STING pathway through its interaction with STING1 and subsequent interference of the recruitment of downstream components TBK1 and IKBKE. This African swine fever virus (isolate Tick/South Africa/Pretoriuskop Pr4/1996) (ASFV) protein is Minor capsid protein p17.